Reading from the N-terminus, the 283-residue chain is Trafficking protein particle complex subunit 31 (283 aa).

Polar residues predominate over residues 1–16; the sequence is MSQRIIQPSASDQQFP. 2 disordered regions span residues 1 to 20 and 126 to 156; these read MSQR…GKSD and SSKL…RLQE. Residues 126–151 are compositionally biased toward low complexity; the sequence is SSKLSNASNSPGMLANSSTATSASAN.

It belongs to the TRAPP small subunits family. BET3 subfamily. Part of the multisubunit TRAPP (transport protein particle) I complex composed of BET3, BET5, TRS20, TRS23, TRS31 and TRS33. Part of the multisubunit TRAPP (transport protein particle) II complex composed of BET3, BET5, TRS20, TRS23, TRS31, TRS33, TRS65, TRS85, TRS120 and TRS130. Part of the multisubunit TRAPP (transport protein particle) III complex composed of BET3, BET5, TRS20, TRS23, TRS31, TRS33 and TRS85.

It localises to the golgi apparatus. The protein localises to the cis-Golgi network. It is found in the endoplasmic reticulum. The protein resides in the preautophagosomal structure. In terms of biological role, component of the TRAPP I, TRAPP II and TRAPP III complexes which act as guanine nucleotide exchange factors (GEF) for YPT1. TRAPP I plays a key role in the late stages of endoplasmic reticulum to Golgi traffic. TRAPP II plays a role in intra-Golgi transport. TRAPP III plays a role in autophagosome formation. This chain is Trafficking protein particle complex subunit 31 (TRS31), found in Saccharomyces cerevisiae (strain ATCC 204508 / S288c) (Baker's yeast).